A 230-amino-acid chain; its full sequence is ATP synthase subunit a (230 aa).

A run of 6 helical transmembrane segments spans residues alanine 26–alanine 46, phenylalanine 83–isoleucine 103, asparagine 112–isoleucine 132, phenylalanine 143–leucine 163, leucine 182–methionine 202, and glycine 203–glutamine 223.

Belongs to the ATPase A chain family. F-type ATPases have 2 components, CF(1) - the catalytic core - and CF(0) - the membrane proton channel. CF(1) has five subunits: alpha(3), beta(3), gamma(1), delta(1), epsilon(1). CF(0) has three main subunits: a(1), b(2) and c(9-12). The alpha and beta chains form an alternating ring which encloses part of the gamma chain. CF(1) is attached to CF(0) by a central stalk formed by the gamma and epsilon chains, while a peripheral stalk is formed by the delta and b chains.

The protein localises to the cell inner membrane. Key component of the proton channel; it plays a direct role in the translocation of protons across the membrane. The chain is ATP synthase subunit a from Trichlorobacter lovleyi (strain ATCC BAA-1151 / DSM 17278 / SZ) (Geobacter lovleyi).